Here is a 179-residue protein sequence, read N- to C-terminus: Putative invertase inhibitor (179 aa).

The signal sequence occupies residues 1 to 23 (MKLSFSLCIFFFNLLLLLQAVIS). Intrachain disulfides connect Cys-31–Cys-46 and Cys-102–Cys-142.

This sequence belongs to the PMEI family. In terms of assembly, monomer. Post-translationally, not glycosylated. Expressed in pollen (at protein level). Expressed in stem, but not leaves (at protein level). Expressed in pollen.

It localises to the secreted. The protein localises to the cell wall. Its subcellular location is the endoplasmic reticulum. In terms of biological role, invertase inhibitor. This Platanus acerifolia (London plane tree) protein is Putative invertase inhibitor.